Reading from the N-terminus, the 388-residue chain is Succinate--CoA ligase [ADP-forming] subunit beta (388 aa).

An ATP-grasp domain is found at 9–244 (KALFAEYGLP…PSQDDAREAH (236 aa)). ATP-binding positions include Lys-46, 53–55 (GRG), Glu-99, Thr-102, and Glu-107. Mg(2+) is bound by residues Asn-199 and Asp-213. Residues Asn-264 and 321-323 (GIV) contribute to the substrate site.

It belongs to the succinate/malate CoA ligase beta subunit family. In terms of assembly, heterotetramer of two alpha and two beta subunits. Requires Mg(2+) as cofactor.

The enzyme catalyses succinate + ATP + CoA = succinyl-CoA + ADP + phosphate. The catalysed reaction is GTP + succinate + CoA = succinyl-CoA + GDP + phosphate. Its pathway is carbohydrate metabolism; tricarboxylic acid cycle; succinate from succinyl-CoA (ligase route): step 1/1. Functionally, succinyl-CoA synthetase functions in the citric acid cycle (TCA), coupling the hydrolysis of succinyl-CoA to the synthesis of either ATP or GTP and thus represents the only step of substrate-level phosphorylation in the TCA. The beta subunit provides nucleotide specificity of the enzyme and binds the substrate succinate, while the binding sites for coenzyme A and phosphate are found in the alpha subunit. The polypeptide is Succinate--CoA ligase [ADP-forming] subunit beta (Shewanella amazonensis (strain ATCC BAA-1098 / SB2B)).